The primary structure comprises 366 residues: MDSYEYNELLKKLQTKVENIGSIVKPDDIKARLKEIEAIEQDPDFWQDIARAGALNKEKTKISNMLAKFSDANQAVSDAKELFELANSENDEETINSLFEDAKNLDEKIVNLEISMLLSGEDDGKNAIVSIHPGAGGTESNDWASMLYRMYLRFCEREGFKVETLDFQEGEEAGLKDVSFIVKGENAYGYFKAENGIHRLVRTSPFDSAGRRHTSFSSVMVSPEVDDDIEIEIEEKDLKIDTYRASGAGGQHVNKTESAIRITHIPTGIVVQCQNDRSQHKNRATAMKMLKSRLYELELMKQQEASNSVEKSEIGWGHQIRSYVLFPYQQVKDNRSGEAYSQTDAILDGDIKKMIEGVLIAQKAEA.

Glutamine 251 carries the N5-methylglutamine modification.

This sequence belongs to the prokaryotic/mitochondrial release factor family. Post-translationally, methylated by PrmC. Methylation increases the termination efficiency of RF2.

Its subcellular location is the cytoplasm. Functionally, peptide chain release factor 2 directs the termination of translation in response to the peptide chain termination codons UGA and UAA. This Campylobacter concisus (strain 13826) protein is Peptide chain release factor 2.